The primary structure comprises 499 residues: Glutamate--tRNA ligase (499 aa).

The 'HIGH' region motif lies at 12-22 (PSPTGHLHIGN). A 'KMSKS' region motif is present at residues 259–263 (KLSKR). An ATP-binding site is contributed by Lys262.

Belongs to the class-I aminoacyl-tRNA synthetase family. Glutamate--tRNA ligase type 1 subfamily. As to quaternary structure, monomer.

The protein resides in the cytoplasm. It catalyses the reaction tRNA(Glu) + L-glutamate + ATP = L-glutamyl-tRNA(Glu) + AMP + diphosphate. Its function is as follows. Catalyzes the attachment of glutamate to tRNA(Glu) in a two-step reaction: glutamate is first activated by ATP to form Glu-AMP and then transferred to the acceptor end of tRNA(Glu). This Lactobacillus johnsonii (strain CNCM I-12250 / La1 / NCC 533) protein is Glutamate--tRNA ligase.